We begin with the raw amino-acid sequence, 204 residues long: Hydrophilin YNL190W (204 aa).

A signal peptide spans 1 to 20; it reads MKFSSVTAITLATVATVATA. Residues 35 to 46 are compositionally biased toward low complexity; that stretch reads SDGSLTTTTSTH. Positions 35 to 179 are disordered; it reads SDGSLTTTTS…ARKNNAAPGP (145 aa). Residues 47–59 show a composition bias toward basic residues; it reads TTHKYGKFNKTSK. Asn-55, Asn-64, Asn-75, Asn-84, Asn-95, Asn-104, Asn-115, Asn-124, Asn-135, Asn-144, and Asn-155 each carry an N-linked (GlcNAc...) asparagine glycan. The span at 67–79 shows a compositional bias: basic residues; that stretch reads GTHKYGKFNKTSK. Residues 87-99 show a composition bias toward basic residues; sequence GTHKYGKFNKTSK. Over residues 107-119 the composition is skewed to basic residues; sequence GTHKYGKFNKTSK. Positions 127–139 are enriched in basic residues; the sequence is GTHKYGKFNKTSK. Basic residues predominate over residues 147–156; sequence GTHKYGKFNK. Asn-174 carries the GPI-anchor amidated asparagine lipid modification. A propeptide spans 175–204 (removed in mature form); the sequence is AAPGPSNFNSIKLFGVTAGSAAVAGALLLL.

The protein belongs to the PGA14 family. The GPI-anchor is attached to the protein in the endoplasmic reticulum and serves to target the protein to the cell surface. There, the glucosamine-inositol phospholipid moiety is cleaved off and the GPI-modified mannoprotein is covalently attached via its lipidless GPI glycan remnant to the 1,6-beta-glucan of the outer cell wall layer.

Its subcellular location is the secreted. It localises to the cell wall. It is found in the membrane. In terms of biological role, hydrophilin which is essential to overcome the simple stress of the desiccation-rehydration process. This Saccharomyces cerevisiae (strain ATCC 204508 / S288c) (Baker's yeast) protein is Hydrophilin YNL190W.